The sequence spans 840 residues: Probable alpha-glucuronidase A (840 aa).

The N-terminal stretch at 1–19 (MWSGIPIFALLSSIGIAAA) is a signal peptide. N-linked (GlcNAc...) asparagine glycosylation is found at Asn50, Asn149, Asn222, Asn262, Asn279, Asn310, Asn465, Asn527, Asn576, Asn610, Asn682, Asn723, and Asn732.

It belongs to the glycosyl hydrolase 67 family.

It localises to the secreted. It catalyses the reaction an alpha-D-glucuronoside + H2O = D-glucuronate + an alcohol. Alpha-glucuronidase involved in the hydrolysis of xylan, a major structural heterogeneous polysaccharide found in plant biomass representing the second most abundant polysaccharide in the biosphere, after cellulose. Releases 4-O-methylglucuronic acid from xylan. The polypeptide is Probable alpha-glucuronidase A (aguA) (Aspergillus fumigatus (strain ATCC MYA-4609 / CBS 101355 / FGSC A1100 / Af293) (Neosartorya fumigata)).